Reading from the N-terminus, the 443-residue chain is Transcriptional regulatory protein ZraR (443 aa).

The 115-residue stretch at 7 to 121 folds into the Response regulatory domain; it reads DILVVDDDIS…KLQLTLSEAL (115 aa). 4-aspartylphosphate is present on aspartate 56. A Sigma-54 factor interaction domain is found at 141–370; the sequence is MVGDSPAMRA…LENAVERAVV (230 aa). ATP contacts are provided by glycine 172, threonine 173, arginine 329, and arginine 359. A DNA-binding region (H-T-H motif) is located at residues 423–442; that stretch reads KTEAARRLGITRKTLLAKLS.

In terms of processing, phosphorylated by ZraS.

The protein resides in the cytoplasm. Activity of the ZraS/ZraR two-component system is repressed by the zinc-bound form of ZraP, which probably interacts with the periplasmic region of ZraS. In terms of biological role, part of the Zra signaling pathway, an envelope stress response (ESR) system composed of the periplasmic accessory protein ZraP, the histidine kinase ZraS and the transcriptional regulator ZraR. The ZraPSR system contributes to antibiotic resistance and is important for membrane integrity in the presence of membrane-targeting biocides. ZraR is a member of the two-component regulatory system ZraS/ZraR. When activated by ZraS, acts in conjunction with sigma-54 to regulate the expression of zraP in the presence of high Zn(2+) or Pb(2+) concentrations. Also positively autoregulates the expression of the zraSR operon. This is Transcriptional regulatory protein ZraR (zraR) from Klebsiella oxytoca.